Here is a 340-residue protein sequence, read N- to C-terminus: Conidiation-specific protein 13 (340 aa).

The tract at residues 313 to 340 (AEAAAGISSGKPAADRKTKGKKGTKFRV) is disordered. A compositionally biased stretch (basic residues) spans 330 to 340 (TKGKKGTKFRV).

In Neurospora crassa (strain ATCC 24698 / 74-OR23-1A / CBS 708.71 / DSM 1257 / FGSC 987), this protein is Conidiation-specific protein 13 (con-13).